The primary structure comprises 255 residues: ETS-related transcription factor Elf-5 (255 aa).

One can recognise a PNT domain in the interval 33–119; the sequence is YPAFEHQTAC…FILQSIRSQG (87 aa). Residues 163 to 244 constitute a DNA-binding region (ETS); sequence SHLWEFVRDL…VDRRLVYKFG (82 aa).

This sequence belongs to the ETS family.

The protein resides in the nucleus. In terms of biological role, transcriptionally activator that may play a role in regulating the later stages of keratinocytes terminal differentiation. Binds to DNA sequences containing the consensus nucleotide core sequence GGA[AT]. This Bos taurus (Bovine) protein is ETS-related transcription factor Elf-5 (ELF5).